The primary structure comprises 199 residues: Fe/S biogenesis protein NfuA (199 aa).

Residues Cys151 and Cys154 each contribute to the [4Fe-4S] cluster site.

This sequence belongs to the NfuA family. In terms of assembly, homodimer. The cofactor is [4Fe-4S] cluster.

Functionally, involved in iron-sulfur cluster biogenesis. Binds a 4Fe-4S cluster, can transfer this cluster to apoproteins, and thereby intervenes in the maturation of Fe/S proteins. Could also act as a scaffold/chaperone for damaged Fe/S proteins. In Xanthomonas campestris pv. campestris (strain 8004), this protein is Fe/S biogenesis protein NfuA.